We begin with the raw amino-acid sequence, 339 residues long: Ketol-acid reductoisomerase (NADP(+)) (339 aa).

A KARI N-terminal Rossmann domain is found at 1-182 (MRVYYDRDAD…GGGRSGIIET (182 aa)). Residues 24-27 (YGSQ), Arg48, Ser51, Thr53, and 83-86 (DEHQ) contribute to the NADP(+) site. Residue His108 is part of the active site. Gly134 serves as a coordination point for NADP(+). One can recognise a KARI C-terminal knotted domain in the interval 183–328 (NFREECETDL…ARLRGMMPWI (146 aa)). Asp191, Glu195, Glu227, and Glu231 together coordinate Mg(2+). Ser252 contacts substrate.

This sequence belongs to the ketol-acid reductoisomerase family. Mg(2+) is required as a cofactor.

The catalysed reaction is (2R)-2,3-dihydroxy-3-methylbutanoate + NADP(+) = (2S)-2-acetolactate + NADPH + H(+). The enzyme catalyses (2R,3R)-2,3-dihydroxy-3-methylpentanoate + NADP(+) = (S)-2-ethyl-2-hydroxy-3-oxobutanoate + NADPH + H(+). The protein operates within amino-acid biosynthesis; L-isoleucine biosynthesis; L-isoleucine from 2-oxobutanoate: step 2/4. It participates in amino-acid biosynthesis; L-valine biosynthesis; L-valine from pyruvate: step 2/4. Involved in the biosynthesis of branched-chain amino acids (BCAA). Catalyzes an alkyl-migration followed by a ketol-acid reduction of (S)-2-acetolactate (S2AL) to yield (R)-2,3-dihydroxy-isovalerate. In the isomerase reaction, S2AL is rearranged via a Mg-dependent methyl migration to produce 3-hydroxy-3-methyl-2-ketobutyrate (HMKB). In the reductase reaction, this 2-ketoacid undergoes a metal-dependent reduction by NADPH to yield (R)-2,3-dihydroxy-isovalerate. This Caulobacter sp. (strain K31) protein is Ketol-acid reductoisomerase (NADP(+)).